The sequence spans 122 residues: Acidic phospholipase A2 Tpu-E6b (122 aa).

7 disulfide bridges follow: C26–C115, C28–C44, C43–C95, C49–C122, C50–C88, C57–C81, and C75–C86. The Ca(2+) site is built by Y27, G29, and G31. H47 is an active-site residue. D48 is a binding site for Ca(2+). D89 is an active-site residue.

In terms of assembly, monomer. It depends on Ca(2+) as a cofactor. As to expression, expressed by the venom gland.

The protein resides in the secreted. It carries out the reaction a 1,2-diacyl-sn-glycero-3-phosphocholine + H2O = a 1-acyl-sn-glycero-3-phosphocholine + a fatty acid + H(+). Functionally, snake venom phospholipase A2 (PLA2) that weakly inhibits ADP-induced platelet aggregation when tested on platelet rich plasma from human and rabbit blood (15-25% of inhibition at 5-10 ug of enzyme). Exhibits moderate hydrolytic activities toward L-dipalmitoyl phosphatidylcholine. PLA2 catalyzes the calcium-dependent hydrolysis of the 2-acyl groups in 3-sn-phosphoglycerides. The sequence is that of Acidic phospholipase A2 Tpu-E6b from Craspedocephalus puniceus (Flat-nosed pitviper).